An 899-amino-acid chain; its full sequence is Origin recognition complex subunit 5 (899 aa).

Disordered regions lie at residues 27 to 47, 100 to 166, and 194 to 238; these read FSSPKKSRKESPIFVQNNDDT, DRIN…EYKD, and KNLE…DGNL. Over residues 105–160 the composition is skewed to acidic residues; it reads SEEETNINDDNNDDNNGDYDDDNNSDDDDDNDDNNNNDDNNNDDDEDVDDFEDIKE. The span at 207–218 shows a compositional bias: low complexity; sequence SSDNSMTSSSEE. Over residues 227–237 the composition is skewed to basic and acidic residues; sequence ESDKESDKDGN. 303-310 contributes to the ATP binding site; sequence GLPGMGKT. The interval 409-469 is disordered; the sequence is KRTTENIRSP…NNNSNNVRFN (61 aa). Low complexity predominate over residues 455 to 469; the sequence is KNNFNNNNSNNVRFN.

It belongs to the ORC5 family. In terms of assembly, component of the origin recognition complex (ORC). Interacts with PCNA1; the interaction occurs during the trophozoite stage but not at the late schizont stage.

It localises to the nucleus. The enzyme catalyses ATP + H2O = ADP + phosphate + H(+). Its function is as follows. Component of the origin recognition complex (ORC) that binds origins of replication. The polypeptide is Origin recognition complex subunit 5 (Plasmodium falciparum (isolate 3D7)).